The sequence spans 217 residues: EF-hand domain-containing protein D2 homolog (217 aa).

The segment covering Met-1–Ser-28 has biased composition (low complexity). A disordered region spans residues Met-1–Glu-29. 2 consecutive EF-hand domains span residues Asn-69 to Pro-104 and Gln-105 to Gly-140. Positions 82, 86, 93, 118, 120, 122, 124, and 129 each coordinate Ca(2+). Over residues Glu-191–Gln-204 the composition is skewed to basic and acidic residues. Residues Glu-191–Gln-217 form a disordered region. Residues Arg-206–Gln-217 are compositionally biased toward low complexity.

The protein is EF-hand domain-containing protein D2 homolog (Swip-1) of Drosophila melanogaster (Fruit fly).